Here is a 515-residue protein sequence, read N- to C-terminus: Maturase K (515 aa).

This sequence belongs to the intron maturase 2 family. MatK subfamily.

The protein resides in the plastid. The protein localises to the chloroplast. Usually encoded in the trnK tRNA gene intron. Probably assists in splicing its own and other chloroplast group II introns. This chain is Maturase K, found in Trillium pusillum (Dwarf wakerobin).